The primary structure comprises 118 residues: Turripeptide NCR-01 (118 aa).

A signal peptide spans 1–16 (MLRLILAVALVAACLA). The interval 63 to 118 (QGFQGFLPQPHQKRDSYQHGGYQHQQSFDNFQGSGGMNNDNSDDSFALRNFNNDGY) is disordered. A compositionally biased stretch (polar residues) spans 85–102 (QHQQSFDNFQGSGGMNND).

As to expression, expressed by the venom duct.

The protein resides in the secreted. The chain is Turripeptide NCR-01 from Gemmula speciosa (Splendid gem-turris).